The primary structure comprises 359 residues: Fructose-bisphosphate aldolase 1 (359 aa).

Serine 50 is a binding site for D-glyceraldehyde 3-phosphate. Aspartate 83 acts as the Proton donor in catalysis. 4 residues coordinate Zn(2+): histidine 84, aspartate 105, glutamate 142, and histidine 198. Glycine 199 serves as a coordination point for dihydroxyacetone phosphate. A Zn(2+)-binding site is contributed by histidine 232. Dihydroxyacetone phosphate-binding positions include 233–235 and 275–278; these read GSS and NIDT.

It belongs to the class II fructose-bisphosphate aldolase family. As to quaternary structure, homodimer. Zn(2+) is required as a cofactor.

It catalyses the reaction beta-D-fructose 1,6-bisphosphate = D-glyceraldehyde 3-phosphate + dihydroxyacetone phosphate. It participates in carbohydrate biosynthesis; Calvin cycle. It functions in the pathway carbohydrate degradation; glycolysis; D-glyceraldehyde 3-phosphate and glycerone phosphate from D-glucose: step 4/4. Functionally, catalyzes the aldol condensation of dihydroxyacetone phosphate (DHAP or glycerone-phosphate) with glyceraldehyde 3-phosphate (G3P) to form fructose 1,6-bisphosphate (FBP) in gluconeogenesis and the reverse reaction in glycolysis. This Cereibacter sphaeroides (Rhodobacter sphaeroides) protein is Fructose-bisphosphate aldolase 1 (cfxA).